Reading from the N-terminus, the 588-residue chain is Aspartate--tRNA ligase (588 aa).

Glu-172 provides a ligand contact to L-aspartate. An aspartate region spans residues 196-199 (QLFK). Arg-218 contributes to the L-aspartate binding site. Residues 218–220 (RDE) and Gln-227 contribute to the ATP site. His-449 provides a ligand contact to L-aspartate. Position 483 (Glu-483) interacts with ATP. Arg-490 contributes to the L-aspartate binding site. 535 to 538 (GLDR) provides a ligand contact to ATP.

Belongs to the class-II aminoacyl-tRNA synthetase family. Type 1 subfamily. In terms of assembly, homodimer.

Its subcellular location is the cytoplasm. The catalysed reaction is tRNA(Asp) + L-aspartate + ATP = L-aspartyl-tRNA(Asp) + AMP + diphosphate. Its function is as follows. Catalyzes the attachment of L-aspartate to tRNA(Asp) in a two-step reaction: L-aspartate is first activated by ATP to form Asp-AMP and then transferred to the acceptor end of tRNA(Asp). The polypeptide is Aspartate--tRNA ligase (Pasteurella multocida (strain Pm70)).